A 122-amino-acid chain; its full sequence is Glycine cleavage system H protein (122 aa).

The Lipoyl-binding domain maps to 19-101; the sequence is VATVGITDYA…QGKAWFFKIK (83 aa). Lys-60 is subject to N6-lipoyllysine.

Belongs to the GcvH family. As to quaternary structure, the glycine cleavage system is composed of four proteins: P, T, L and H. The cofactor is (R)-lipoate.

Functionally, the glycine cleavage system catalyzes the degradation of glycine. The H protein shuttles the methylamine group of glycine from the P protein to the T protein. The polypeptide is Glycine cleavage system H protein (Bradyrhizobium diazoefficiens (strain JCM 10833 / BCRC 13528 / IAM 13628 / NBRC 14792 / USDA 110)).